The primary structure comprises 375 residues: Anhydro-N-acetylmuramic acid kinase (375 aa).

12–19 is an ATP binding site; it reads GTSLDGVD.

It belongs to the anhydro-N-acetylmuramic acid kinase family.

The enzyme catalyses 1,6-anhydro-N-acetyl-beta-muramate + ATP + H2O = N-acetyl-D-muramate 6-phosphate + ADP + H(+). Its pathway is amino-sugar metabolism; 1,6-anhydro-N-acetylmuramate degradation. The protein operates within cell wall biogenesis; peptidoglycan recycling. In terms of biological role, catalyzes the specific phosphorylation of 1,6-anhydro-N-acetylmuramic acid (anhMurNAc) with the simultaneous cleavage of the 1,6-anhydro ring, generating MurNAc-6-P. Is required for the utilization of anhMurNAc either imported from the medium or derived from its own cell wall murein, and thus plays a role in cell wall recycling. This Variovorax paradoxus (strain S110) protein is Anhydro-N-acetylmuramic acid kinase.